We begin with the raw amino-acid sequence, 1383 residues long: DNA-directed RNA polymerase subunit beta'' (1383 aa).

Zn(2+) contacts are provided by Cys-220, Cys-289, Cys-296, and Cys-299.

It belongs to the RNA polymerase beta' chain family. RpoC2 subfamily. In plastids the minimal PEP RNA polymerase catalytic core is composed of four subunits: alpha, beta, beta', and beta''. When a (nuclear-encoded) sigma factor is associated with the core the holoenzyme is formed, which can initiate transcription. Zn(2+) is required as a cofactor.

It localises to the plastid. It is found in the chloroplast. It catalyses the reaction RNA(n) + a ribonucleoside 5'-triphosphate = RNA(n+1) + diphosphate. Functionally, DNA-dependent RNA polymerase catalyzes the transcription of DNA into RNA using the four ribonucleoside triphosphates as substrates. The protein is DNA-directed RNA polymerase subunit beta'' of Oenothera parviflora (Small-flowered evening primrose).